The chain runs to 231 residues: uncharacterized protein (231 aa).

10–34 (VVTGAGSGIGEAIATLLHEEGAKVV) is an NADP(+) binding site. Serine 140 contributes to the substrate binding site. Tyrosine 153 serves as the catalytic Proton acceptor.

It belongs to the short-chain dehydrogenases/reductases (SDR) family.

This is an uncharacterized protein from Staphylococcus aureus (strain N315).